A 145-amino-acid polypeptide reads, in one-letter code: Holo-[acyl-carrier-protein] synthase (145 aa).

Positions 9 and 59 each coordinate Mg(2+).

It belongs to the P-Pant transferase superfamily. AcpS family. The cofactor is Mg(2+).

It localises to the cytoplasm. It carries out the reaction apo-[ACP] + CoA = holo-[ACP] + adenosine 3',5'-bisphosphate + H(+). In terms of biological role, transfers the 4'-phosphopantetheine moiety from coenzyme A to a Ser of acyl-carrier-protein. The chain is Holo-[acyl-carrier-protein] synthase from Nocardia farcinica (strain IFM 10152).